A 489-amino-acid polypeptide reads, in one-letter code: Lysine--tRNA ligase (489 aa).

Residues Glu399 and Glu406 each contribute to the Mg(2+) site.

Belongs to the class-II aminoacyl-tRNA synthetase family. As to quaternary structure, homodimer. It depends on Mg(2+) as a cofactor.

Its subcellular location is the cytoplasm. It carries out the reaction tRNA(Lys) + L-lysine + ATP = L-lysyl-tRNA(Lys) + AMP + diphosphate. In Mycoplasma pneumoniae (strain ATCC 29342 / M129 / Subtype 1) (Mycoplasmoides pneumoniae), this protein is Lysine--tRNA ligase (lysS).